Reading from the N-terminus, the 1032-residue chain is Kinesin heavy chain isoform 5A (1032 aa).

Alanine 2 is modified (N-acetylalanine). Residues 9-327 (SIKVLCRFRP…LMFGQRAKTI (319 aa)) enclose the Kinesin motor domain. 86–93 (GQTSSGKT) contributes to the ATP binding site. The segment at 174–315 (VSGPEEILDV…PSSYNDAETK (142 aa)) is microtubule-binding. A necessary for interaction with ZFYVE27 region spans residues 271 to 361 (EGTKSYVPYR…KTKAQKETIA (91 aa)). The stretch at 331–906 (ASVNLELTAE…VDRIKEAVRY (576 aa)) forms a coiled coil. Residues 353 to 1032 (TKAQKETIAK…FPLHQETAAS (680 aa)) are interaction with BICD2. The residue at position 397 (threonine 397) is a Phosphothreonine. The disordered stretch occupies residues 904 to 939 (VRYKSSGKRGHSAQIAKPVRPGHYPASSPTNPYGTR). The interval 907 to 1032 (KSSGKRGHSA…FPLHQETAAS (126 aa)) is globular.

The protein belongs to the TRAFAC class myosin-kinesin ATPase superfamily. Kinesin family. Kinesin subfamily. In terms of assembly, oligomer composed of two heavy chains and two light chains. Interacts with GRIP1. Interacts with FMR1 (via C-terminus); this interaction is increased in a mGluR-dependent manner. Interacts with BORCS5. Interacts with ZFYVE27. Interacts with VAPA, VAPB, SURF4, RAB11A (GDP-bound form), RAB11B (GDP-bound form) and RTN3 in a ZFYVE27-dependent manner. Interacts with BICD2. Interacts with DTNB.

The protein localises to the cytoplasm. Its subcellular location is the perinuclear region. It is found in the cytoskeleton. It localises to the perikaryon. It carries out the reaction ATP + H2O + a kinesin associated with a microtubule at position (n) = ADP + phosphate a kinesin associated with a microtubule at position (n+1, toward the plus end).. Its function is as follows. Microtubule-dependent motor required for slow axonal transport of neurofilament proteins (NFH, NFM and NFL). Can induce formation of neurite-like membrane protrusions in non-neuronal cells in a ZFYVE27-dependent manner. The ZFYVE27-KIF5A complex contributes to the vesicular transport of VAPA, VAPB, SURF4, RAB11A, RAB11B and RTN3 proteins in neurons. Required for anterograde axonal transportation of MAPK8IP3/JIP3 which is essential for MAPK8IP3/JIP3 function in axon elongation. The polypeptide is Kinesin heavy chain isoform 5A (KIF5A) (Pongo abelii (Sumatran orangutan)).